The primary structure comprises 167 residues: Large ribosomal subunit protein uL10 (167 aa).

This sequence belongs to the universal ribosomal protein uL10 family. Part of the ribosomal stalk of the 50S ribosomal subunit. The N-terminus interacts with L11 and the large rRNA to form the base of the stalk. The C-terminus forms an elongated spine to which L12 dimers bind in a sequential fashion forming a multimeric L10(L12)X complex.

In terms of biological role, forms part of the ribosomal stalk, playing a central role in the interaction of the ribosome with GTP-bound translation factors. The chain is Large ribosomal subunit protein uL10 from Chromohalobacter salexigens (strain ATCC BAA-138 / DSM 3043 / CIP 106854 / NCIMB 13768 / 1H11).